Reading from the N-terminus, the 98-residue chain is Ferredoxin-3 (98 aa).

2 4Fe-4S ferredoxin-type domains span residues 18–47 and 66–95; these read FVEA…LQAL and VMSI…HSPL. [4Fe-4S] cluster is bound by residues Cys27, Cys30, Cys33, Cys37, Cys75, Cys78, Cys81, and Cys85.

In terms of assembly, homodimer. [4Fe-4S] cluster serves as cofactor.

Functionally, ferredoxins are iron-sulfur proteins that transfer electrons in a wide variety of metabolic reactions. This chain is Ferredoxin-3 (fdxB), found in Trichormus variabilis (strain ATCC 29413 / PCC 7937) (Anabaena variabilis).